Here is a 365-residue protein sequence, read N- to C-terminus: Chorismate synthase (365 aa).

The disordered stretch occupies residues 41-61 (IQKELDRRRPGQSEVSTPRHE). Arg48 is an NADP(+) binding site. Residues 125–127 (RSS), Gly285, 300–304 (KPTPS), and Arg327 contribute to the FMN site.

The protein belongs to the chorismate synthase family. The cofactor is FMNH2.

The enzyme catalyses 5-O-(1-carboxyvinyl)-3-phosphoshikimate = chorismate + phosphate. Its pathway is metabolic intermediate biosynthesis; chorismate biosynthesis; chorismate from D-erythrose 4-phosphate and phosphoenolpyruvate: step 7/7. Catalyzes the anti-1,4-elimination of the C-3 phosphate and the C-6 proR hydrogen from 5-enolpyruvylshikimate-3-phosphate (EPSP) to yield chorismate, which is the branch point compound that serves as the starting substrate for the three terminal pathways of aromatic amino acid biosynthesis. This reaction introduces a second double bond into the aromatic ring system. The chain is Chorismate synthase from Methanosarcina barkeri (strain Fusaro / DSM 804).